The following is a 258-amino-acid chain: Acyl-[acyl-carrier-protein]--UDP-N-acetylglucosamine O-acyltransferase (258 aa).

It belongs to the transferase hexapeptide repeat family. LpxA subfamily. In terms of assembly, homotrimer.

The protein resides in the cytoplasm. It carries out the reaction a (3R)-hydroxyacyl-[ACP] + UDP-N-acetyl-alpha-D-glucosamine = a UDP-3-O-[(3R)-3-hydroxyacyl]-N-acetyl-alpha-D-glucosamine + holo-[ACP]. Its pathway is glycolipid biosynthesis; lipid IV(A) biosynthesis; lipid IV(A) from (3R)-3-hydroxytetradecanoyl-[acyl-carrier-protein] and UDP-N-acetyl-alpha-D-glucosamine: step 1/6. Its function is as follows. Involved in the biosynthesis of lipid A, a phosphorylated glycolipid that anchors the lipopolysaccharide to the outer membrane of the cell. In Pseudomonas fluorescens (strain SBW25), this protein is Acyl-[acyl-carrier-protein]--UDP-N-acetylglucosamine O-acyltransferase.